Here is a 202-residue protein sequence, read N- to C-terminus: tRNA (pseudouridine(54)-N(1))-methyltransferase (202 aa).

Leu130, Gly152, and Cys185 together coordinate S-adenosyl-L-methionine.

Belongs to the methyltransferase superfamily. TrmY family. In terms of assembly, homodimer.

It is found in the cytoplasm. The enzyme catalyses pseudouridine(54) in tRNA + S-adenosyl-L-methionine = N(1)-methylpseudouridine(54) in tRNA + S-adenosyl-L-homocysteine + H(+). Its function is as follows. Specifically catalyzes the N1-methylation of pseudouridine at position 54 (Psi54) in tRNAs. The chain is tRNA (pseudouridine(54)-N(1))-methyltransferase from Methanococcoides burtonii (strain DSM 6242 / NBRC 107633 / OCM 468 / ACE-M).